The sequence spans 889 residues: DNA mismatch repair protein MutS (889 aa).

An ATP-binding site is contributed by Gly-641–Ser-648.

It belongs to the DNA mismatch repair MutS family.

In terms of biological role, this protein is involved in the repair of mismatches in DNA. It is possible that it carries out the mismatch recognition step. This protein has a weak ATPase activity. This Orientia tsutsugamushi (strain Boryong) (Rickettsia tsutsugamushi) protein is DNA mismatch repair protein MutS.